Reading from the N-terminus, the 477-residue chain is Cytochrome c-552 (477 aa).

The first 26 residues, 1 to 26, serve as a signal peptide directing secretion; sequence MVRISTSISYLWGMVASLFLMMPAYS. Heme c is bound at residue H94. Positions 122, 125, and 126 each coordinate heme. Residues C160, C163, H164, C209, C212, and H213 each contribute to the heme c site. E215, Y216, K261, and Q263 together coordinate Ca(2+). A substrate-binding site is contributed by Y216. Residue H264 participates in substrate binding. Heme c contacts are provided by H275, C282, C285, H286, H301, C314, C317, H318, and H393.

It belongs to the cytochrome c-552 family. The cofactor is Ca(2+). Heme c is required as a cofactor.

It localises to the periplasm. It carries out the reaction 6 Fe(III)-[cytochrome c] + NH4(+) + 2 H2O = 6 Fe(II)-[cytochrome c] + nitrite + 8 H(+). It functions in the pathway nitrogen metabolism; nitrate reduction (assimilation). Functionally, catalyzes the reduction of nitrite to ammonia, consuming six electrons in the process. In Pectobacterium carotovorum subsp. carotovorum (strain PC1), this protein is Cytochrome c-552.